Reading from the N-terminus, the 372-residue chain is MTVLVALFCLVTWTLCTRIPQYSTQGTQQPQQPEKTPHPHPQPEDAFPPTHATDLKIHDPSIIHVDGTYYSYSVGRHIRIHQAPSLDGPWERTGAVLNADSVIPKGDRKAPWAPQTVHHNDTYYCFYAVSNSGCRDSAIGVATSKSPGPGGWTDHGLLVQSGTGKGSDEHPFTSSNTIDPSVFVGEDGHGYLMFGSFWSGIWQVPLDESLLSVAGDTSSEARQLVYMEKAPLPASKHPNPLCREPSGARPIEGSFLSYHEPWYYLWFSYGKCCKFDTKNLPPPGREYSIRVGRSKSPRGPFVDKQGRDLANGGGEIVYASNRDVYAPGGQGVLTEKSGDILYYHYCRYPVIQEIEVDADLTVNKSTSYDFWV.

Positions 1–16 (MTVLVALFCLVTWTLC) are cleaved as a signal peptide. The segment covering 23-34 (STQGTQQPQQPE) has biased composition (low complexity). The disordered stretch occupies residues 23–52 (STQGTQQPQQPEKTPHPHPQPEDAFPPTHA). The active-site Proton acceptor is aspartate 59. Asparagine 120 carries an N-linked (GlcNAc...) asparagine glycan. Glutamate 252 acts as the Proton donor in catalysis. The N-linked (GlcNAc...) asparagine glycan is linked to asparagine 363.

This sequence belongs to the glycosyl hydrolase 43 family.

It is found in the secreted. It catalyses the reaction Endohydrolysis of (1-&gt;5)-alpha-arabinofuranosidic linkages in (1-&gt;5)-arabinans.. It functions in the pathway glycan metabolism; L-arabinan degradation. Functionally, endo-1,5-alpha-L-arabinanase involved in degradation of pectin. Its preferred substrate is linear 1,5-alpha-L-arabinan. This is Probable arabinan endo-1,5-alpha-L-arabinosidase B (abnB) from Aspergillus fumigatus (strain CBS 144.89 / FGSC A1163 / CEA10) (Neosartorya fumigata).